Reading from the N-terminus, the 406-residue chain is RNA exonuclease 4 (406 aa).

Positions 1–10 (MAPELSSNWK) are enriched in polar residues. 2 disordered regions span residues 1–108 (MAPE…TLPS) and 156–181 (AGLTLPGHSSSSPKSNKNGLPLPTDL). Low complexity-rich tracts occupy residues 54 to 64 (SQQQQQASNPS), 72 to 82 (SQTQSQPSSQK), and 94 to 108 (SKPTTSSSPNSTLPS). Positions 162–173 (GHSSSSPKSNKN) are enriched in polar residues. An Exonuclease domain is found at 216–367 (YLSIDCEMVG…EDARVAMLLF (152 aa)). The segment covering 377-387 (ENSNRYEEGQA) has biased composition (basic and acidic residues). The interval 377–406 (ENSNRYEEGQAKKGGNGGGGGGGKKKKGKK) is disordered. Residues 388–398 (KKGGNGGGGGG) are compositionally biased toward gly residues.

The protein belongs to the REXO4 family.

Its subcellular location is the nucleus. Exoribonuclease involved in ribosome biosynthesis. Involved in the processing of ITS1, the internal transcribed spacer localized between the 18S and 5.8S rRNAs. This is RNA exonuclease 4 (rex-4) from Neurospora crassa (strain ATCC 24698 / 74-OR23-1A / CBS 708.71 / DSM 1257 / FGSC 987).